A 523-amino-acid chain; its full sequence is MRAIFRATKRMPPGQRKTAAIVVIGDEILKGTTRDTNSHFLCKRLHKLGVNIKKIAVVGDEISEISREVQSASSAYDYVITSGGVGPTHDDKTYLGLAHAFTDQLHFSDEIRQAVNRFLPTYIDKKKSEGVEEGIEEVVRVVTEKLCTIPKMSQLLWGTQKVDGRVSTFPVVRVANVVALPGVPKFCERAFDELQDQLFPVEERQSMFFDTIYTDLDEFDFSRRLADVAARFEEQNVQIGSYPELKNKFFKTKLTIETESSESMEAVRIALKELLVGHIVYYDSHAWTDTVAKWRAFKKRELVEAKNVDFVRKLEEAEKIVEDIVERYPLDQIALSFNGGKDCTVLLHLLRLKVDEKYGASKAIQGFHIMVEDQFPEATQFIIDAAQFYNIQVLEFPGPLKIGLAGLKKQRPSIIPVLMGSRATDPNGKYMKTPVEWTDSDWPKVLRVCPILNWTYSDVWHMLRGLCVPYCKLYDQGYTSLGGRDNTVKHPALRIVASDGKEHYLPAYKLHNDAEERSNRSNL.

Residues 20 to 111 are molybdenum cofactor biosynthesis protein-like; the sequence is AIVVIGDEIL…TDQLHFSDEI (92 aa). The segment at 332–489 is FAD synthase; that stretch reads QIALSFNGGK…SLGGRDNTVK (158 aa).

The protein in the N-terminal section; belongs to the MoaB/Mog family. In the C-terminal section; belongs to the PAPS reductase family. FAD1 subfamily. The cofactor is Mg(2+).

It carries out the reaction FMN + ATP + H(+) = FAD + diphosphate. It functions in the pathway cofactor biosynthesis; FAD biosynthesis; FAD from FMN: step 1/1. Catalyzes the adenylation of flavin mononucleotide (FMN) to form flavin adenine dinucleotide (FAD) coenzyme. This chain is Probable FAD synthase, found in Caenorhabditis briggsae.